A 188-amino-acid chain; its full sequence is Putative manganese efflux pump MntP (188 aa).

6 consecutive transmembrane segments (helical) span residues 3 to 23 (LSAT…ASIG), 41 to 61 (LIFG…GMLA), 62 to 82 (SQFI…FLGG), 107 to 129 (LLVT…LAFL), 143 to 163 (ATFI…PLLG), and 168 to 188 (ILGG…HFAG).

Belongs to the MntP (TC 9.B.29) family.

It localises to the cell inner membrane. Probably functions as a manganese efflux pump. The protein is Putative manganese efflux pump MntP of Klebsiella pneumoniae subsp. pneumoniae (strain ATCC 700721 / MGH 78578).